The sequence spans 213 residues: Redox-sensing transcriptional repressor Rex (213 aa).

Positions 18–57 (LYYRIFKRFHAEKIERANSKQIAEAIGIDSATVRRDFSYF) form a DNA-binding region, H-T-H motif. NAD(+) is bound at residue 92–97 (GIGNMG).

This sequence belongs to the transcriptional regulatory Rex family. Homodimer.

It localises to the cytoplasm. In terms of biological role, modulates transcription in response to changes in cellular NADH/NAD(+) redox state. Binds to the promoter of the aldehyde-alcohol dehydrogenase adhE gene. Functions as a redox-dependent repressor of adhE expression. This is Redox-sensing transcriptional repressor Rex from Streptococcus pneumoniae (strain ATCC BAA-255 / R6).